The sequence spans 1014 residues: Probable sucrose-phosphate synthase 5 (1014 aa).

2 stretches are compositionally biased toward basic and acidic residues: residues 29–41 (RRLE…REAA) and 49–58 (EGEKDGKPDT). Disordered stretches follow at residues 29 to 108 (RRLE…SDEE) and 648 to 677 (QLLR…SSEP).

This sequence belongs to the glycosyltransferase 1 family. In terms of assembly, homodimer or homotetramer. Expressed in germinating seeds.

It carries out the reaction beta-D-fructose 6-phosphate + UDP-alpha-D-glucose = sucrose 6(F)-phosphate + UDP + H(+). The protein operates within glycan biosynthesis; sucrose biosynthesis; sucrose from D-fructose 6-phosphate and UDP-alpha-D-glucose: step 1/2. Activity is regulated by phosphorylation and moderated by concentration of metabolites and light. Functionally, plays a role in photosynthetic sucrose synthesis by catalyzing the rate-limiting step of sucrose biosynthesis from UDP-glucose and fructose- 6-phosphate. Involved in the regulation of carbon partitioning in the leaves of plants. May regulate the synthesis of sucrose and therefore play a major role as a limiting factor in the export of photoassimilates out of the leaf. Plays a role for sucrose availability that is essential for plant growth and fiber elongation. The polypeptide is Probable sucrose-phosphate synthase 5 (SPS5) (Oryza sativa subsp. japonica (Rice)).